Reading from the N-terminus, the 685-residue chain is Polyphosphate kinase (685 aa).

ATP is bound at residue Asn45. Arg375 and Arg405 together coordinate Mg(2+). His435 acts as the Phosphohistidine intermediate in catalysis. Residues Tyr468, Arg564, and His592 each contribute to the ATP site.

It belongs to the polyphosphate kinase 1 (PPK1) family. Mg(2+) serves as cofactor. Post-translationally, an intermediate of this reaction is the autophosphorylated ppk in which a phosphate is covalently linked to a histidine residue through a N-P bond.

The enzyme catalyses [phosphate](n) + ATP = [phosphate](n+1) + ADP. In terms of biological role, catalyzes the reversible transfer of the terminal phosphate of ATP to form a long-chain polyphosphate (polyP). The polypeptide is Polyphosphate kinase (Neisseria meningitidis serogroup C (strain 053442)).